We begin with the raw amino-acid sequence, 219 residues long: Lipid transferase CIDEB (219 aa).

The CIDE-N domain maps to 34-110; sequence PQRPFRVCDH…VLQSGQSWSP (77 aa).

Belongs to the CIDE family. Interacts with DFFA. Interacts with DFFB; inhibited by DFFB. Interacts with APOB. Interacts with PREB/SEC12; facilitating loading of SCAP-SREBP into COPII vesicles. In terms of assembly, (Microbial infection) Interacts (via N-terminus) with HCV non-structural protein 5A (via N-terminus); this interaction seems to regulate the association of HCV particles with ApoE. As to expression, highly expressed in liver and small intestine and, at lower levels, in colon, kidney and spleen.

It is found in the lipid droplet. Its subcellular location is the endoplasmic reticulum membrane. It localises to the golgi apparatus. The protein resides in the cytoplasmic vesicle. The protein localises to the COPI-coated vesicle. In terms of biological role, lipid transferase specifically expressed in hepatocytes, which promotes unilocular lipid droplet formation by mediating lipid droplet fusion. Lipid droplet fusion promotes their enlargement, restricting lipolysis and favoring lipid storage. Localizes on the lipid droplet surface, at focal contact sites between lipid droplets, and mediates atypical lipid droplet fusion by promoting directional net neutral lipid transfer from the smaller to larger lipid droplets. The transfer direction may be driven by the internal pressure difference between the contacting lipid droplet pair. Promotes lipid exchange and lipid droplet fusion in both small and large lipid droplet-containing hepatocytes. In addition to its role in lipid droplet fusion, also involved in cytoplasmic vesicle biogenesis and transport. Required for very-low-density lipoprotein (VLDL) lipidation and maturation. Probably involved in the biogenesis of VLDL transport vesicles by forming a COPII vesicle coat and facilitating the formation of endoplasmic reticulum-derived large vesicles. Also involved in sterol-regulated export of the SCAP-SREBP complex, composed of SCAP, SREBF1/SREBP1 and SREBF2/SREBP2, by promoting loading of SCAP-SREBP into COPII vesicles. May also activate apoptosis. Functionally, (Microbial infection) Involved in Hepatatis C virus (HCV) assembly and required for HCV entry into hepatocytes. In Homo sapiens (Human), this protein is Lipid transferase CIDEB.